A 119-amino-acid chain; its full sequence is MAGLATFVVSLLLVTLCAHCIDPAGSVSIPSSCCMFFISKKVPENRVVTYQLLNGSVCPKAGVVFTTKKNQKFCGDPQLHWVQKLMKNIEARRKKVSPGVRAMSTKALVQRYPANSTSI.

The first 26 residues, 1 to 26 (MAGLATFVVSLLLVTLCAHCIDPAGS), serve as a signal peptide directing secretion. 2 cysteine pairs are disulfide-bonded: Cys-33–Cys-58 and Cys-34–Cys-74. 2 N-linked (GlcNAc...) asparagine glycosylation sites follow: Asn-54 and Asn-115.

It belongs to the intercrine beta (chemokine CC) family.

It is found in the secreted. Functionally, chemotactic for resting T-lymphocytes, and eosinophils. Has lower chemotactic activity for neutrophils but none for monocytes and activated lymphocytes. Is a strong suppressor of colony formation by a multipotential hematopoietic progenitor cell line. Binds to CCR3. This chain is C-C motif chemokine 24, found in Canis lupus familiaris (Dog).